Reading from the N-terminus, the 398-residue chain is NADH-quinone oxidoreductase subunit D (398 aa).

This sequence belongs to the complex I 49 kDa subunit family. NDH-1 is composed of 14 different subunits. Subunits NuoB, C, D, E, F, and G constitute the peripheral sector of the complex.

It localises to the cell inner membrane. The enzyme catalyses a quinone + NADH + 5 H(+)(in) = a quinol + NAD(+) + 4 H(+)(out). Its function is as follows. NDH-1 shuttles electrons from NADH, via FMN and iron-sulfur (Fe-S) centers, to quinones in the respiratory chain. The immediate electron acceptor for the enzyme in this species is believed to be ubiquinone. Couples the redox reaction to proton translocation (for every two electrons transferred, four hydrogen ions are translocated across the cytoplasmic membrane), and thus conserves the redox energy in a proton gradient. The chain is NADH-quinone oxidoreductase subunit D from Caulobacter vibrioides (strain ATCC 19089 / CIP 103742 / CB 15) (Caulobacter crescentus).